A 323-amino-acid polypeptide reads, in one-letter code: Staphylococcal-like nuclease CAN1 (323 aa).

A lipid anchor (N-myristoyl glycine) is attached at Gly-2. Cys-11 carries the S-palmitoyl cysteine lipid modification. The TNase-like domain maps to 130-306 (NTLPVDTKSV…RQKRVGLWAS (177 aa)). Asp-143 contacts Ca(2+). Arg-213 is an active-site residue. Asp-218 is a binding site for Ca(2+). Residues Glu-221 and Arg-255 contribute to the active site.

Belongs to the thermonuclease family. The cofactor is Ca(2+).

The protein localises to the cell membrane. With respect to regulation, inhibited by Zn(2+). Enzyme that catalyzes the hydrolysis of both DNA and RNA at the 5' position of the phosphodiester bond. Possesses activity toward the single-stranded DNA, double-stranded DNA and RNA. May be involved in genomic DNA degradation during programmed cell death. This chain is Staphylococcal-like nuclease CAN1 (CAN1), found in Arabidopsis thaliana (Mouse-ear cress).